The following is a 633-amino-acid chain: Chaperone protein DnaK (633 aa).

T198 is subject to Phosphothreonine; by autocatalysis.

Belongs to the heat shock protein 70 family.

Functionally, acts as a chaperone. The chain is Chaperone protein DnaK from Rhodopseudomonas palustris (strain HaA2).